Here is a 70-residue protein sequence, read N- to C-terminus: MDVMSSSLQQQRVVVEQLRREAAIDRQTISESCAKMMKYITEHEQEDYLLTGFTSQKVNPFREKSSCTVL.

Cys-67 is modified (cysteine methyl ester). A lipid anchor (S-geranylgeranyl cysteine) is attached at Cys-67. The propeptide at 68–70 is removed in mature form; that stretch reads TVL.

It belongs to the G protein gamma family. As to quaternary structure, g proteins are composed of 3 units, alpha, beta and gamma. Predominantly expressed in the central nervous system.

Its subcellular location is the cell membrane. In terms of biological role, guanine nucleotide-binding proteins (G proteins) are involved as a modulator or transducer in various transmembrane signaling systems. The beta and gamma chains are required for the GTPase activity, for replacement of GDP by GTP, and for G protein-effector interaction. In Drosophila melanogaster (Fruit fly), this protein is Guanine nucleotide-binding protein subunit gamma-1 (Ggamma1).